The following is a 132-amino-acid chain: Intraflagellar transport protein 20 homolog B (132 aa).

A coiled-coil region spans residues 87–112 (EAQQQQLYALIAEKKMQLERYRIEYD).

Its subcellular location is the golgi apparatus. The protein localises to the cis-Golgi network. The protein resides in the cytoplasm. It is found in the cytoskeleton. It localises to the microtubule organizing center. Its subcellular location is the centrosome. The protein localises to the centriole. The protein resides in the cell projection. It is found in the cilium. Involved in ciliary process assembly. May play a role in the trafficking of ciliary membrane proteins from the Golgi complex to the cilium. Regulates the platelet-derived growth factor receptor-alpha (PDGFRA) signaling pathway. Plays an important role in spermatogenesis, particularly spermiogenesis, when germ cells form flagella. The polypeptide is Intraflagellar transport protein 20 homolog B (ift20-b) (Xenopus laevis (African clawed frog)).